The chain runs to 116 residues: Fluoride-specific ion channel FluC 2 (116 aa).

2 helical membrane passes run 3–23 and 43–63; these read LLTA…RYAV and LLFG…AVTV. Residues glycine 67 and threonine 70 each contribute to the Na(+) site. Residues 96 to 116 traverse the membrane as a helical segment; it reads VGTLAAALLAVFLGIALGAAL.

Belongs to the fluoride channel Fluc/FEX (TC 1.A.43) family.

Its subcellular location is the cell membrane. The enzyme catalyses fluoride(in) = fluoride(out). Its activity is regulated as follows. Na(+) is not transported, but it plays an essential structural role and its presence is essential for fluoride channel function. Fluoride-specific ion channel. Important for reducing fluoride concentration in the cell, thus reducing its toxicity. The protein is Fluoride-specific ion channel FluC 2 of Natronomonas pharaonis (strain ATCC 35678 / DSM 2160 / CIP 103997 / JCM 8858 / NBRC 14720 / NCIMB 2260 / Gabara) (Halobacterium pharaonis).